The chain runs to 76 residues: Defensin-like protein 155 (76 aa).

An N-terminal signal peptide occupies residues Met1–Gly27. 4 disulfides stabilise this stretch: Cys31–Cys76, Cys40–Cys59, Cys45–Cys70, and Cys49–Cys72.

It belongs to the DEFL family.

The protein localises to the secreted. The chain is Defensin-like protein 155 (LCR36) from Arabidopsis thaliana (Mouse-ear cress).